A 399-amino-acid chain; its full sequence is S-adenosylmethionine synthase (399 aa).

His15 is a binding site for ATP. Asp17 is a binding site for Mg(2+). A K(+)-binding site is contributed by Glu43. Residues Glu56 and Gln99 each contribute to the L-methionine site. The flexible loop stretch occupies residues 99–109 (QSPDIARGVNR). Residues 166-168 (DAK), 232-233 (RF), Asp241, 247-248 (RK), Ala264, and Lys268 contribute to the ATP site. Asp241 contacts L-methionine. Lys272 is an L-methionine binding site.

It belongs to the AdoMet synthase family. In terms of assembly, homotetramer; dimer of dimers. Mg(2+) serves as cofactor. Requires K(+) as cofactor.

It is found in the cytoplasm. The catalysed reaction is L-methionine + ATP + H2O = S-adenosyl-L-methionine + phosphate + diphosphate. It functions in the pathway amino-acid biosynthesis; S-adenosyl-L-methionine biosynthesis; S-adenosyl-L-methionine from L-methionine: step 1/1. Its function is as follows. Catalyzes the formation of S-adenosylmethionine (AdoMet) from methionine and ATP. The overall synthetic reaction is composed of two sequential steps, AdoMet formation and the subsequent tripolyphosphate hydrolysis which occurs prior to release of AdoMet from the enzyme. The polypeptide is S-adenosylmethionine synthase (Nitrosospira multiformis (strain ATCC 25196 / NCIMB 11849 / C 71)).